The following is an 80-amino-acid chain: Putative membrane protein insertion efficiency factor (80 aa).

It belongs to the UPF0161 family.

The protein resides in the cell inner membrane. Functionally, could be involved in insertion of integral membrane proteins into the membrane. The sequence is that of Putative membrane protein insertion efficiency factor from Paracoccus denitrificans (strain Pd 1222).